A 554-amino-acid polypeptide reads, in one-letter code: Glucose-6-phosphate isomerase (554 aa).

The Proton donor role is filled by Glu358. Active-site residues include His389 and Lys515. Residues 527–540 are compositionally biased toward polar residues; sequence ADNSPAPQSDSSTD. The tract at residues 527–554 is disordered; that stretch reads ADNSPAPQSDSSTDALVRRYRSERGRTS. A compositionally biased stretch (basic and acidic residues) spans 542–554; that stretch reads LVRRYRSERGRTS.

It belongs to the GPI family.

Its subcellular location is the cytoplasm. It carries out the reaction alpha-D-glucose 6-phosphate = beta-D-fructose 6-phosphate. It participates in carbohydrate biosynthesis; gluconeogenesis. The protein operates within carbohydrate degradation; glycolysis; D-glyceraldehyde 3-phosphate and glycerone phosphate from D-glucose: step 2/4. Functionally, catalyzes the reversible isomerization of glucose-6-phosphate to fructose-6-phosphate. This is Glucose-6-phosphate isomerase from Mycobacterium avium (strain 104).